Here is a 391-residue protein sequence, read N- to C-terminus: Heme A synthase (391 aa).

8 consecutive transmembrane segments (helical) span residues 37–57 (IRLWLMALFLLVMAMIVVGGL), 121–141 (RQLGRVIGLVWAVGFLGFLAA), 152–172 (LLALGALGGLQGGIGWWMVAS), 186–206 (LATHLGLAFIILGLIAWQALL), 229–249 (TTVLIGVAFLQIVLGALVAGI), 298–318 (FLHRMAGYTLAALGLIFWIFG), 332–352 (LLAMALLAQILLGVGTVLSAA), and 354–374 (WQVAIAHQVGAVVIWVLILHA). His-300 lines the heme pocket. Residue His-360 coordinates heme.

Belongs to the COX15/CtaA family. Type 2 subfamily. As to quaternary structure, interacts with CtaB. Heme b is required as a cofactor.

It localises to the cell membrane. The enzyme catalyses Fe(II)-heme o + 2 A + H2O = Fe(II)-heme a + 2 AH2. It functions in the pathway porphyrin-containing compound metabolism; heme A biosynthesis; heme A from heme O: step 1/1. In terms of biological role, catalyzes the conversion of heme O to heme A by two successive hydroxylations of the methyl group at C8. The first hydroxylation forms heme I, the second hydroxylation results in an unstable dihydroxymethyl group, which spontaneously dehydrates, resulting in the formyl group of heme A. The sequence is that of Heme A synthase from Cereibacter sphaeroides (strain ATCC 17023 / DSM 158 / JCM 6121 / CCUG 31486 / LMG 2827 / NBRC 12203 / NCIMB 8253 / ATH 2.4.1.) (Rhodobacter sphaeroides).